The primary structure comprises 688 residues: Homoaconitase, mitochondrial (688 aa).

A mitochondrion-targeting transit peptide spans 1–19 (MALLYLSTRSSLKKTGARC). Residues C346, C406, and C409 each contribute to the [4Fe-4S] cluster site.

Belongs to the aconitase/IPM isomerase family. It depends on [4Fe-4S] cluster as a cofactor.

Its subcellular location is the mitochondrion. The catalysed reaction is (2R,3S)-homoisocitrate = cis-homoaconitate + H2O. It participates in amino-acid biosynthesis; L-lysine biosynthesis via AAA pathway; L-alpha-aminoadipate from 2-oxoglutarate: step 3/5. Catalyzes the reversible hydration of cis-homoaconitate to (2R,3S)-homoisocitrate, a step in the alpha-aminoadipate pathway for lysine biosynthesis. The polypeptide is Homoaconitase, mitochondrial (LYS4) (Debaryomyces hansenii (strain ATCC 36239 / CBS 767 / BCRC 21394 / JCM 1990 / NBRC 0083 / IGC 2968) (Yeast)).